Consider the following 891-residue polypeptide: DNA mismatch repair protein MutS (891 aa).

617-624 (GPNMSGKS) contacts ATP. Residues 805-827 (REKIEEEEPKTKDTKRGPSEKVK) are compositionally biased toward basic and acidic residues. The disordered stretch occupies residues 805–840 (REKIEEEEPKTKDTKRGPSEKVKNASPTLPRDEKGR).

It belongs to the DNA mismatch repair MutS family.

Its function is as follows. This protein is involved in the repair of mismatches in DNA. It is possible that it carries out the mismatch recognition step. This protein has a weak ATPase activity. The chain is DNA mismatch repair protein MutS from Porphyromonas gingivalis (strain ATCC BAA-308 / W83).